The primary structure comprises 156 residues: Ribosomal RNA large subunit methyltransferase H (156 aa).

S-adenosyl-L-methionine-binding positions include Leu-73, Gly-104, and Leu-123–Met-128.

The protein belongs to the RNA methyltransferase RlmH family. Homodimer.

Its subcellular location is the cytoplasm. The catalysed reaction is pseudouridine(1915) in 23S rRNA + S-adenosyl-L-methionine = N(3)-methylpseudouridine(1915) in 23S rRNA + S-adenosyl-L-homocysteine + H(+). In terms of biological role, specifically methylates the pseudouridine at position 1915 (m3Psi1915) in 23S rRNA. The protein is Ribosomal RNA large subunit methyltransferase H of Proteus mirabilis (strain HI4320).